The sequence spans 266 residues: uncharacterized protein (266 aa).

Transmembrane regions (helical) follow at residues 9–29, 37–57, 69–89, 123–143, 153–173, 184–204, 216–236, and 246–266; these read IAAL…LFIF, TMPH…LVFY, LIKV…ISLL, FLLM…MIFT, YNPF…LVIA, LPLA…LFLL, SVFA…ILIL, and TNSL…MVFV.

The protein resides in the cell membrane. This is an uncharacterized protein from Haemophilus influenzae (strain ATCC 51907 / DSM 11121 / KW20 / Rd).